Reading from the N-terminus, the 360-residue chain is Peptide chain release factor 1 (360 aa).

Gln237 carries the post-translational modification N5-methylglutamine.

This sequence belongs to the prokaryotic/mitochondrial release factor family. Post-translationally, methylated by PrmC. Methylation increases the termination efficiency of RF1.

The protein resides in the cytoplasm. Functionally, peptide chain release factor 1 directs the termination of translation in response to the peptide chain termination codons UAG and UAA. The chain is Peptide chain release factor 1 from Cellvibrio japonicus (strain Ueda107) (Pseudomonas fluorescens subsp. cellulosa).